A 330-amino-acid polypeptide reads, in one-letter code: Ferric enterobactin transport system permease protein FepG (330 aa).

The Periplasmic segment spans residues Met1 to Arg7. Residues Leu8–Arg28 form a helical membrane-spanning segment. At Ser29–Arg62 the chain is on the cytoplasmic side. The chain crosses the membrane as a helical span at residues Val63–Leu83. The Periplasmic portion of the chain corresponds to Met84–Asp92. The helical transmembrane segment at Val93–Gln113 threads the bilayer. The Cytoplasmic portion of the chain corresponds to Asp114 to Ala117. The chain crosses the membrane as a helical span at residues Ile118–Trp138. The Periplasmic portion of the chain corresponds to Arg139–Arg146. Residues Leu147–Leu167 traverse the membrane as a helical segment. Over Lys168–Trp190 the chain is Cytoplasmic. The helical transmembrane segment at Ala191–Val211 threads the bilayer. The Periplasmic segment spans residues Arg212–Arg235. The chain crosses the membrane as a helical span at residues Leu236 to Ile256. Residues Ser257–Arg275 lie on the Cytoplasmic side of the membrane. Residues Trp276–Ala296 form a helical membrane-spanning segment. Residues Gln297–Tyr303 lie on the Periplasmic side of the membrane. A helical membrane pass occupies residues Gln304–Ile324. The Cytoplasmic portion of the chain corresponds to Gln325–Lys330.

Belongs to the binding-protein-dependent transport system permease family. FecCD subfamily. As to quaternary structure, the complex is composed of two ATP-binding proteins (FepC), two transmembrane proteins (FepD and FepG) and a solute-binding protein (FepB).

Its subcellular location is the cell inner membrane. Part of the ABC transporter complex FepBDGC involved in ferric enterobactin uptake. Responsible for the translocation of the substrate across the membrane. The protein is Ferric enterobactin transport system permease protein FepG (fepG) of Escherichia coli (strain K12).